A 190-amino-acid chain; its full sequence is Potassium-transporting ATPase KdpC subunit (190 aa).

Residues 10 to 30 (TFLFLLLITGGVYPLLTTALG) form a helical membrane-spanning segment.

It belongs to the KdpC family. In terms of assembly, the system is composed of three essential subunits: KdpA, KdpB and KdpC.

It is found in the cell inner membrane. In terms of biological role, part of the high-affinity ATP-driven potassium transport (or Kdp) system, which catalyzes the hydrolysis of ATP coupled with the electrogenic transport of potassium into the cytoplasm. This subunit acts as a catalytic chaperone that increases the ATP-binding affinity of the ATP-hydrolyzing subunit KdpB by the formation of a transient KdpB/KdpC/ATP ternary complex. This chain is Potassium-transporting ATPase KdpC subunit, found in Shigella flexneri serotype 5b (strain 8401).